A 332-amino-acid chain; its full sequence is tRNA dimethylallyltransferase (332 aa).

Residue 14–21 (GPTASGKT) participates in ATP binding. 16–21 (TASGKT) contributes to the substrate binding site. An interaction with substrate tRNA region spans residues 39 to 42 (DSMQ). Residues 312-332 (NKRSSNHDCKRKHPRPSTREL) form a disordered region. Residues 320 to 332 (CKRKHPRPSTREL) are compositionally biased toward basic residues.

This sequence belongs to the IPP transferase family. In terms of assembly, monomer. Mg(2+) is required as a cofactor.

It carries out the reaction adenosine(37) in tRNA + dimethylallyl diphosphate = N(6)-dimethylallyladenosine(37) in tRNA + diphosphate. In terms of biological role, catalyzes the transfer of a dimethylallyl group onto the adenine at position 37 in tRNAs that read codons beginning with uridine, leading to the formation of N6-(dimethylallyl)adenosine (i(6)A). This is tRNA dimethylallyltransferase from Staphylococcus epidermidis (strain ATCC 35984 / DSM 28319 / BCRC 17069 / CCUG 31568 / BM 3577 / RP62A).